Consider the following 185-residue polypeptide: MIADIKKATEQKMQKSLDALKVDFSKVRSGRPHTGLLDHITVDYYGTPTPIRQLANVTLADARTIGVIPWDKKAFSAIEKAIRDSDMGLNPMTAGEMVRVPMPPLTEERRKDLTKIVRTEAETARIAMRNIRRDANTQLKELLKDKLIAEDEDRRAQDDIQKLTDRYIAEVDKLLQAKEAELMAV.

It belongs to the RRF family.

It is found in the cytoplasm. Its function is as follows. Responsible for the release of ribosomes from messenger RNA at the termination of protein biosynthesis. May increase the efficiency of translation by recycling ribosomes from one round of translation to another. The sequence is that of Ribosome-recycling factor from Nitrosomonas eutropha (strain DSM 101675 / C91 / Nm57).